The sequence spans 224 residues: UPF0758 protein PM1152 (224 aa).

In terms of domain architecture, MPN spans 102–224 (AFKNSENVRF…YYSFAENRLL (123 aa)). 3 residues coordinate Zn(2+): His-173, His-175, and Asp-186. A JAMM motif motif is present at residues 173–186 (HNHPSGNPEPSASD).

The protein belongs to the UPF0758 family.

This chain is UPF0758 protein PM1152, found in Pasteurella multocida (strain Pm70).